Reading from the N-terminus, the 326-residue chain is NADH-specific methylglyoxal reductase (326 aa).

NAD(+) contacts are provided by residues Thr-20–Trp-21 and Asp-54. Catalysis depends on Tyr-59, which acts as the Proton donor. NAD(+)-binding positions include Gln-189, Tyr-217–Gln-222, Gly-291, and Gln-297.

The protein belongs to the aldo/keto reductase family. Aldo/keto reductase 11 subfamily. In terms of assembly, monomer.

The enzyme catalyses hydroxyacetone + NAD(+) = methylglyoxal + NADH + H(+). Catalyzes the NADH-dependent reduction of methylglyoxal (2-oxopropanal) in vitro. It is not known if this activity has physiological significance. Cannot use NADPH as a cosubstrate. Seems to play some role in intestinal colonization. The protein is NADH-specific methylglyoxal reductase (ydjG) of Escherichia coli (strain K12).